Consider the following 422-residue polypeptide: L-threonine dehydratase biosynthetic IlvA (422 aa).

Lys-56 bears the N6-(pyridoxal phosphate)lysine mark. Pyridoxal 5'-phosphate-binding positions include Asn-83, 189 to 193 (GGGGL), and Ser-315. The ACT-like domain occupies 339–413 (HYFILNFPQR…FDPSNIYINE (75 aa)).

It belongs to the serine/threonine dehydratase family. Homotetramer. Requires pyridoxal 5'-phosphate as cofactor.

It carries out the reaction L-threonine = 2-oxobutanoate + NH4(+). Its pathway is amino-acid biosynthesis; L-isoleucine biosynthesis; 2-oxobutanoate from L-threonine: step 1/1. Functionally, catalyzes the anaerobic formation of alpha-ketobutyrate and ammonia from threonine in a two-step reaction. The first step involved a dehydration of threonine and a production of enamine intermediates (aminocrotonate), which tautomerizes to its imine form (iminobutyrate). Both intermediates are unstable and short-lived. The second step is the nonenzymatic hydrolysis of the enamine/imine intermediates to form 2-ketobutyrate and free ammonia. In the low water environment of the cell, the second step is accelerated by RidA. In Staphylococcus aureus (strain NCTC 8325 / PS 47), this protein is L-threonine dehydratase biosynthetic IlvA (ilvA).